Reading from the N-terminus, the 535-residue chain is Flavin-containing monooxygenase iboF (535 aa).

The N-terminal stretch at 1–24 is a signal peptide; sequence MFSLRPTALVSLSVVLFSIQETLS. 60–65 is a binding site for FAD; that stretch reads GAGPSG. 3 N-linked (GlcNAc...) asparagine glycosylation sites follow: N134, N243, and N300. Residue 307-312 coordinates NADP(+); the sequence is GAAASG. N-linked (GlcNAc...) asparagine glycans are attached at residues N356, N382, and N410.

This sequence belongs to the FMO family. FAD is required as a cofactor.

Its pathway is secondary metabolite biosynthesis. Flavin-containing monooxygenase; part of the gene cluster that mediates the biosynthesis of the psychoactive metabolites ibotenic acid and muscimol. The first committed step is glutamate hydroxylation by the 2-oxoglutarate-dependent dioxygenase iboH, and the last step is decarboxylation of ibotenic acid to muscimol by the decarboxylase iboD. The order of the intermediate reactions is somewhat ambiguous. IboA likely activates the carboxylic acid at position 5 to introduce an amide bond, and the flavin monooxygenase iboF generates the N-O bond. There are several options for the latter step. One option is that iboF directly hydroxylates the amide nitrogen formed by iboA to produce a hydroxamic acid species. Another option is that iboF hydroxylates an external N-containing compound, whose resulting N-O bond is subsequently introduced into the hydroxyglutamate scaffold. The paralogous PLP-dependent cystathionine gamma-synthase-like enzymes iboG1 and iboG2 are likely involved in substitution of the OH group at position 3 by the O-N moiety. The first cyclic intermediate is most probably tricholomic acid which is likely desaturated to ibotenic acid by the cytochrome P450 monooxygenase iboC. The chain is Flavin-containing monooxygenase iboF from Amanita muscaria (strain Koide BX008).